We begin with the raw amino-acid sequence, 438 residues long: Trigger factor (438 aa).

In terms of domain architecture, PPIase FKBP-type spans 160-245; that stretch reads DDKVTIDFVG…VKKIQQAELP (86 aa).

The protein belongs to the FKBP-type PPIase family. Tig subfamily.

It is found in the cytoplasm. The catalysed reaction is [protein]-peptidylproline (omega=180) = [protein]-peptidylproline (omega=0). Involved in protein export. Acts as a chaperone by maintaining the newly synthesized protein in an open conformation. Functions as a peptidyl-prolyl cis-trans isomerase. The sequence is that of Trigger factor from Francisella tularensis subsp. novicida (strain U112).